Consider the following 612-residue polypeptide: Kelch repeat and BTB domain-containing protein 3 (612 aa).

The 68-residue stretch at 52-119 folds into the BTB domain; sequence YDFKIIMKDE…AYTGKTKITD (68 aa). In terms of domain architecture, BACK spans 150-250; the sequence is NLVNCLQLLS…VRLHQLSEET (101 aa). Kelch repeat units follow at residues 291–337, 339–390, 400–450, 452–502, and 548–595; these read STTE…GSSL, SYGE…STMK, MALD…PEAS, CQNV…ATLI, and GIED…FYCQ.

This is Kelch repeat and BTB domain-containing protein 3 from Pongo abelii (Sumatran orangutan).